Here is a 234-residue protein sequence, read N- to C-terminus: MLFSPPLQRATLIQRYKRFLADVITLDGTALTLHCPNTGAMTGCATPGDTVWYSTSENTKRKYPHTWELTETQSGVFICVNTLWANRLTKEAIQEDRLPELAGYNILKSEVKYGAERSRIDFMLQADFRPDCYIEVKSVTLAEKENGYFPDAITERGQKHLRELMGVAAAGHRAVVLFAVLHSAITRFSPARHIDIKYAQLLSEAQNKGVEVLAYKAELSATKMELNKSVPIML.

Residues 201–220 constitute a DNA-binding region (H-T-H motif); that stretch reads LLSEAQNKGVEVLAYKAELS.

This sequence belongs to the SfsA family.

In terms of biological role, binds to DNA non-specifically. Could be a regulatory factor involved in maltose metabolism. This is Sugar fermentation stimulation protein A from Salmonella arizonae (strain ATCC BAA-731 / CDC346-86 / RSK2980).